The sequence spans 932 residues: Protocadherin gamma-A7 (932 aa).

Positions 1–28 (MAAQPRGGDCRGFVLLSILLGTPWEAWA) are cleaved as a signal peptide. Cadherin domains follow at residues 29–133 (GRIL…VPRF), 134–242 (LTEE…TPVF), 243–347 (SLPQ…APEV), 348–452 (TMTS…PPTF), 453–562 (PHSS…PPEI), and 570–682 (DGST…EPSD). The Extracellular portion of the chain corresponds to 29-692 (GRILYSVSEE…GPYNYDLTLY (664 aa)). Residues Asn419 and Asn545 are each glycosylated (N-linked (GlcNAc...) asparagine). Residues 693 to 713 (LVVAVAAVSCVFLAFVLVLLA) traverse the membrane as a helical segment. Residues 714-932 (LRLRRWHKSR…KKKSGKKEKK (219 aa)) are Cytoplasmic-facing. Disordered stretches follow at residues 804 to 841 (VPSIQQAPPNTDWRFSQAQRPGTSGSQNGDDTGTWPNN) and 902 to 932 (ATLTNAAGKRDGKAPAGGNGNKKKSGKKEKK). Polar residues predominate over residues 806–841 (SIQQAPPNTDWRFSQAQRPGTSGSQNGDDTGTWPNN). Residues 922–932 (NKKKSGKKEKK) are compositionally biased toward basic residues.

The protein localises to the cell membrane. Potential calcium-dependent cell-adhesion protein. May be involved in the establishment and maintenance of specific neuronal connections in the brain. In Pan troglodytes (Chimpanzee), this protein is Protocadherin gamma-A7 (PCDHGA7).